We begin with the raw amino-acid sequence, 393 residues long: NAD(P)H-quinone oxidoreductase subunit H, chloroplastic (393 aa).

The protein belongs to the complex I 49 kDa subunit family. In terms of assembly, NDH is composed of at least 16 different subunits, 5 of which are encoded in the nucleus.

The protein resides in the plastid. It localises to the chloroplast thylakoid membrane. It catalyses the reaction a plastoquinone + NADH + (n+1) H(+)(in) = a plastoquinol + NAD(+) + n H(+)(out). The enzyme catalyses a plastoquinone + NADPH + (n+1) H(+)(in) = a plastoquinol + NADP(+) + n H(+)(out). Functionally, NDH shuttles electrons from NAD(P)H:plastoquinone, via FMN and iron-sulfur (Fe-S) centers, to quinones in the photosynthetic chain and possibly in a chloroplast respiratory chain. The immediate electron acceptor for the enzyme in this species is believed to be plastoquinone. Couples the redox reaction to proton translocation, and thus conserves the redox energy in a proton gradient. This chain is NAD(P)H-quinone oxidoreductase subunit H, chloroplastic, found in Nasturtium officinale (Watercress).